A 383-amino-acid chain; its full sequence is Presenilin-associated rhomboid-like protein A, mitochondrial (383 aa).

A mitochondrion-targeting transit peptide spans 1–37 (MAWRSCFMKWTQINSINASSLCPKSTRLNIHPQQRCG). The tract at residues 35 to 75 (RCGFRKTERPSESKKGVQETEAEAGGHNRAVPPKPVPPLPP) is disordered. Topologically, residues 38–83 (FRKTERPSESKKGVQETEAEAGGHNRAVPPKPVPPLPPRRPHQLFR) are mitochondrial matrix. Residues 39-52 (RKTERPSESKKGVQ) show a composition bias toward basic and acidic residues. Over residues 66–75 (PPKPVPPLPP) the composition is skewed to pro residues. The helical transmembrane segment at 84 to 104 (PLVFTVGFTGCSFGAAAILQY) threads the bilayer. Topologically, residues 105-168 (ESVKSRVQLA…FWSGLSEGQK (64 aa)) are mitochondrial intermembrane. The chain crosses the membrane as a helical span at residues 169-189 (TVTGIIALNTVVLCCWRVPAM). Residues 190-219 (QRFLVKYFTSNPASKTRCLPMVLSSFSHYS) lie on the Mitochondrial matrix side of the membrane. The helical transmembrane segment at 220 to 240 (VIHMVVNMYVLWTFSSSIVSL) threads the bilayer. Topologically, residues 241-245 (LGREQ) are mitochondrial intermembrane. A helical membrane pass occupies residues 246–266 (FLALYLSGGVISTFVSYVFKT). Over 267–271 (ATGRL) the chain is Mitochondrial matrix. Residues 272–292 (GPSLGASGSIMTVLAAVCTKI) traverse the membrane as a helical segment. Catalysis depends on Ser278, which acts as the Nucleophile. The Mitochondrial intermembrane segment spans residues 293-298 (PEAKLG). The chain crosses the membrane as a helical span at residues 299 to 319 (IVLLPVISFSAGNALKALVAL). Over 320 to 334 (DIAGLVLGWRFFDHA) the chain is Mitochondrial matrix. A helical transmembrane segment spans residues 335 to 355 (AHLGGALFGVWYIGYGHELIW). His336 is a catalytic residue. Topologically, residues 356–383 (RKREPLIKFWHELRNMSPGRPGPGGGGG) are mitochondrial intermembrane.

The protein belongs to the peptidase S54 family.

The protein localises to the mitochondrion inner membrane. It catalyses the reaction Cleaves type-1 transmembrane domains using a catalytic dyad composed of serine and histidine that are contributed by different transmembrane domains.. In terms of biological role, required for the control of apoptosis during postnatal growth. Essential for proteolytic processing of an antiapoptotic form of opa1 which prevents the release of mitochondrial cytochrome c in response to intrinsic apoptotic signals. The chain is Presenilin-associated rhomboid-like protein A, mitochondrial (parla) from Danio rerio (Zebrafish).